A 205-amino-acid polypeptide reads, in one-letter code: MNEQLVNRTMAFAGILQAIAQVQHLARHGELDNAELAASLNTILVTNPDNTADVYQDKIVLQKGYKLILNQLGDSSQKDVEITRYLVGVLALERKLVRSNSGLGMLAERINQVNRQLHHFAITDEQVIANLASIYSDIISNLGPKIQISGNPVCLQRPIIQQKIRALLLAAMRSAVLWRQLGGKRRHLVFARKAIVDTAKKSLTL.

It belongs to the HflD family.

The protein resides in the cytoplasm. It is found in the cell inner membrane. This chain is High frequency lysogenization protein HflD homolog, found in Shewanella baltica (strain OS155 / ATCC BAA-1091).